Consider the following 366-residue polypeptide: UPF0324 membrane protein RSc1111 (366 aa).

8 helical membrane-spanning segments follow: residues Leu-21–Ala-43, Leu-103–Val-125, Ala-137–Val-159, Ala-169–Ala-191, Val-198–Ala-220, Val-240–Glu-262, Trp-283–His-305, and Ala-343–Ala-365.

This sequence belongs to the UPF0324 family.

It localises to the cell membrane. The chain is UPF0324 membrane protein RSc1111 from Ralstonia nicotianae (strain ATCC BAA-1114 / GMI1000) (Ralstonia solanacearum).